Consider the following 219-residue polypeptide: Orotate phosphoribosyltransferase (219 aa).

Residue lysine 26 participates in 5-phospho-alpha-D-ribose 1-diphosphate binding. 34–35 is a binding site for orotate; sequence FF. Residues 72-73, arginine 102, lysine 103, lysine 106, histidine 108, and 128-136 contribute to the 5-phospho-alpha-D-ribose 1-diphosphate site; these read YK and DDVITAGTA. Positions 132 and 160 each coordinate orotate.

This sequence belongs to the purine/pyrimidine phosphoribosyltransferase family. PyrE subfamily. Homodimer.

The catalysed reaction is orotidine 5'-phosphate + diphosphate = orotate + 5-phospho-alpha-D-ribose 1-diphosphate. It functions in the pathway pyrimidine metabolism; UMP biosynthesis via de novo pathway; UMP from orotate: step 1/2. Catalyzes the transfer of a ribosyl phosphate group from 5-phosphoribose 1-diphosphate to orotate, leading to the formation of orotidine monophosphate (OMP). This chain is Orotate phosphoribosyltransferase (URA5), found in Yarrowia lipolytica (strain CLIB 122 / E 150) (Yeast).